The following is a 354-amino-acid chain: Methionine import ATP-binding protein MetN (354 aa).

Residues 8–250 (LDHIDITFRQ…PKEALTQEFI (243 aa)) form the ABC transporter domain. 42–49 (GYSGAGKS) contributes to the ATP binding site.

This sequence belongs to the ABC transporter superfamily. Methionine importer (TC 3.A.1.24) family. The complex is composed of two ATP-binding proteins (MetN), two transmembrane proteins (MetI) and a solute-binding protein (MetQ).

It is found in the cell membrane. It catalyses the reaction L-methionine(out) + ATP + H2O = L-methionine(in) + ADP + phosphate + H(+). The enzyme catalyses D-methionine(out) + ATP + H2O = D-methionine(in) + ADP + phosphate + H(+). Its function is as follows. Part of the ABC transporter complex MetNIQ involved in methionine import. Responsible for energy coupling to the transport system. This chain is Methionine import ATP-binding protein MetN, found in Streptococcus pyogenes serotype M2 (strain MGAS10270).